A 914-amino-acid polypeptide reads, in one-letter code: DNA mismatch repair protein MutS (914 aa).

The interval 28–74 (NTNSVKDSNLNDEELSKNAELRPRKRKKSVLLQNSVGEQTEDFSNDE) is disordered. 726–733 (GPNASGKS) contributes to the ATP binding site.

Belongs to the DNA mismatch repair MutS family.

In terms of biological role, this protein is involved in the repair of mismatches in DNA. It is possible that it carries out the mismatch recognition step. This protein has a weak ATPase activity. This Prochlorococcus marinus (strain SARG / CCMP1375 / SS120) protein is DNA mismatch repair protein MutS.